Reading from the N-terminus, the 1011-residue chain is Beta-galactosidase A (1011 aa).

A signal peptide spans 1–19 (MKLLSSWVVAALAAQAAGA). Residues Y96, 140–142 (NAE), and N199 each bind substrate. The active-site Proton donor is E200. 2 disulfide bridges follow: C205/C206 and C267/C316. The active-site Nucleophile is the E299. Y365 lines the substrate pocket. N-linked (GlcNAc...) asparagine glycosylation is found at N374, N456, N625, N707, N763, N780, and N917.

Belongs to the glycosyl hydrolase 35 family. In terms of assembly, monomer.

It localises to the secreted. It carries out the reaction Hydrolysis of terminal non-reducing beta-D-galactose residues in beta-D-galactosides.. Cleaves beta-linked terminal galactosyl residues from gangliosides, glycoproteins, and glycosaminoglycans. Has high in vitro transglycosylation activity with p-nitrophenyl-beta-D-galactopyranoside, methyl-beta-D-galactopyranoside or lactose as a donor and galactose as an acceptor. This Penicillium sp protein is Beta-galactosidase A (lacA).